The primary structure comprises 441 residues: Homoserine dehydrogenase (441 aa).

Positions 17 and 18 each coordinate NADP(+). Residues V18 and G47 each coordinate NAD(+). V18 is an NADPH binding site. Residues R49, R50, and K107 each contribute to the NADP(+) site. R49 is an NADPH binding site. K107 is a binding site for NADPH. The Na(+) site is built by E131, V134, G136, and I138. Residues G189 and E192 each contribute to the NADP(+) site. E192 and D203 together coordinate L-homoserine. The active-site Proton donor is the K207. G309 is a binding site for NADP(+). An NAD(+)-binding site is contributed by G309. Residue G309 participates in NADPH binding. The ACT domain occupies Y356–R435.

This sequence belongs to the homoserine dehydrogenase family. A metal cation serves as cofactor.

The catalysed reaction is L-homoserine + NADP(+) = L-aspartate 4-semialdehyde + NADPH + H(+). It carries out the reaction L-homoserine + NAD(+) = L-aspartate 4-semialdehyde + NADH + H(+). Its pathway is amino-acid biosynthesis; L-methionine biosynthesis via de novo pathway; L-homoserine from L-aspartate: step 3/3. It participates in amino-acid biosynthesis; L-threonine biosynthesis; L-threonine from L-aspartate: step 3/5. Catalyzes the conversion of L-aspartate-beta-semialdehyde (L-Asa) to L-homoserine (L-Hse), the third step in the biosynthesis of threonine and methionine from aspartate. In Mycobacterium leprae (strain TN), this protein is Homoserine dehydrogenase (hom).